The sequence spans 351 residues: Cytochrome c biogenesis protein CcsA (351 aa).

A run of 8 helical transmembrane segments spans residues 17 to 37, 38 to 58, 68 to 88, 97 to 117, 143 to 163, 259 to 279, 286 to 306, and 320 to 340; these read VLFLTMLLYWIGAAFPGLPAI, NALGTAGMAIANLSIATLLGA, LSNLYESLFFLSWGITTVHLI, LVGVFTTPVAMGIVAFATLTL, MMLSYSALMVGSLLAIAFLVI, IIGLGFPLLTIGIIAGAVWAN, WSWDPKETWALITWLVFAAYL, and AILAASGFVVVWICYLGVNLL.

Belongs to the CcmF/CycK/Ccl1/NrfE/CcsA family. As to quaternary structure, may interact with ccs1.

The protein resides in the cellular thylakoid membrane. Required during biogenesis of c-type cytochromes (cytochrome c6 and cytochrome f) at the step of heme attachment. This Nostoc sp. (strain PCC 7120 / SAG 25.82 / UTEX 2576) protein is Cytochrome c biogenesis protein CcsA.